A 315-amino-acid polypeptide reads, in one-letter code: AT-hook motif nuclear-localized protein 19 (315 aa).

The span at 1-25 (MANPWWTGQVNLSGLETTPPGSSQL) shows a compositional bias: polar residues. Disordered stretches follow at residues 1–104 (MANP…RDSP) and 239–285 (EEEA…YNMP). A compositionally biased stretch (basic and acidic residues) spans 61–74 (DNLSGDDHEPREGA). Positions 80–92 (RRPRGRPAGSKNK) form a DNA-binding region, a.T hook. Residues 104-248 (PNALKSHVME…EEEAAERGGG (145 aa)) form the PPC domain. The span at 245–276 (RGGGGGSGGVVPGQLGGGGSPLSSGAGGGDGN) shows a compositional bias: gly residues.

As to expression, slightly expressed in roots.

The protein localises to the nucleus. Functionally, transcription factor that specifically binds AT-rich DNA sequences related to the nuclear matrix attachment regions (MARs). Negatively regulates plant innate immunity (PTI) to pathogens through the down-regulation of the PAMP-triggered FRK1 expression. Positively regulates defense against fungal Verticillium infection. The chain is AT-hook motif nuclear-localized protein 19 from Arabidopsis thaliana (Mouse-ear cress).